We begin with the raw amino-acid sequence, 308 residues long: Aspartate carbamoyltransferase catalytic subunit (308 aa).

Arg-49 and Thr-50 together coordinate carbamoyl phosphate. Position 77 (Lys-77) interacts with L-aspartate. Carbamoyl phosphate contacts are provided by Arg-99, His-127, and Gln-130. Residues Arg-160 and Arg-211 each coordinate L-aspartate. Ala-252 and Pro-253 together coordinate carbamoyl phosphate.

It belongs to the aspartate/ornithine carbamoyltransferase superfamily. ATCase family. As to quaternary structure, heterododecamer (2C3:3R2) of six catalytic PyrB chains organized as two trimers (C3), and six regulatory PyrI chains organized as three dimers (R2).

The catalysed reaction is carbamoyl phosphate + L-aspartate = N-carbamoyl-L-aspartate + phosphate + H(+). The protein operates within pyrimidine metabolism; UMP biosynthesis via de novo pathway; (S)-dihydroorotate from bicarbonate: step 2/3. Functionally, catalyzes the condensation of carbamoyl phosphate and aspartate to form carbamoyl aspartate and inorganic phosphate, the committed step in the de novo pyrimidine nucleotide biosynthesis pathway. In Geobacillus kaustophilus (strain HTA426), this protein is Aspartate carbamoyltransferase catalytic subunit.